The sequence spans 108 residues: Heme-degrading monooxygenase HmoA (108 aa).

The 94-residue stretch at 2 to 95 (FVQLRKMTVK…DYLISTEVSM (94 aa)) folds into the ABM domain. Residue histidine 76 coordinates heme.

It belongs to the antibiotic biosynthesis monooxygenase family. In terms of assembly, homodimer.

The protein localises to the cytoplasm. It carries out the reaction heme b + 3 reduced [NADPH--hemoprotein reductase] + 3 O2 = biliverdin IXalpha + CO + Fe(2+) + 3 oxidized [NADPH--hemoprotein reductase] + 3 H2O + H(+). In terms of biological role, allows bacterial pathogens to use the host heme as an iron source. Catalyzes the oxidative degradation of the heme macrocyclic porphyrin ring in the presence of a suitable electron donor such as ascorbate or NADPH--cytochrome P450 reductase, with subsequent release of free iron. This is Heme-degrading monooxygenase HmoA (hmoA) from Bacillus subtilis (strain 168).